Reading from the N-terminus, the 954-residue chain is Glycine dehydrogenase (decarboxylating) (954 aa).

Lysine 706 is modified (N6-(pyridoxal phosphate)lysine).

The protein belongs to the GcvP family. As to quaternary structure, the glycine cleavage system is composed of four proteins: P, T, L and H. It depends on pyridoxal 5'-phosphate as a cofactor.

It catalyses the reaction N(6)-[(R)-lipoyl]-L-lysyl-[glycine-cleavage complex H protein] + glycine + H(+) = N(6)-[(R)-S(8)-aminomethyldihydrolipoyl]-L-lysyl-[glycine-cleavage complex H protein] + CO2. In terms of biological role, the glycine cleavage system catalyzes the degradation of glycine. The P protein binds the alpha-amino group of glycine through its pyridoxal phosphate cofactor; CO(2) is released and the remaining methylamine moiety is then transferred to the lipoamide cofactor of the H protein. This Pseudomonas savastanoi pv. phaseolicola (strain 1448A / Race 6) (Pseudomonas syringae pv. phaseolicola (strain 1448A / Race 6)) protein is Glycine dehydrogenase (decarboxylating).